The sequence spans 112 residues: MISDKIKLTAKDILEKEFKTGMRGYQQEEVDKFLDMIIKDYEAFHKEFEQLKQQNARLKRELEEQKLAATQVPQQPVVQTPVAQPVYNNTNTDILKRLSNLEKAVFGSKLYE.

A coiled-coil region spans residues 38–72; it reads IKDYEAFHKEFEQLKQQNARLKRELEEQKLAATQV.

Belongs to the GpsB family. In terms of assembly, forms polymers through the coiled coil domains. Interacts with PBP1, MreC and EzrA.

Its subcellular location is the cytoplasm. Divisome component that associates with the complex late in its assembly, after the Z-ring is formed, and is dependent on DivIC and PBP2B for its recruitment to the divisome. Together with EzrA, is a key component of the system that regulates PBP1 localization during cell cycle progression. Its main role could be the removal of PBP1 from the cell pole after pole maturation is completed. Also contributes to the recruitment of PBP1 to the division complex. Not essential for septum formation. The protein is Cell cycle protein GpsB of Bacillus anthracis (strain A0248).